Reading from the N-terminus, the 455-residue chain is Ribulose bisphosphate carboxylase large chain (455 aa).

Position 5 is an N6,N6,N6-trimethyllysine (Lys5). Asn114 and Thr164 together coordinate substrate. The active-site Proton acceptor is the Lys166. Lys168 provides a ligand contact to substrate. Mg(2+)-binding residues include Lys192, Asp194, and Glu195. Lys192 is modified (N6-carboxylysine). His285 serves as the catalytic Proton acceptor. Substrate contacts are provided by Arg286, His318, and Ser370.

It belongs to the RuBisCO large chain family. Type I subfamily. As to quaternary structure, heterohexadecamer of 8 large chains and 8 small chains; disulfide-linked. The disulfide link is formed within the large subunit homodimers. Requires Mg(2+) as cofactor. Post-translationally, the disulfide bond which can form in the large chain dimeric partners within the hexadecamer appears to be associated with oxidative stress and protein turnover.

It localises to the plastid. Its subcellular location is the chloroplast. It catalyses the reaction 2 (2R)-3-phosphoglycerate + 2 H(+) = D-ribulose 1,5-bisphosphate + CO2 + H2O. The enzyme catalyses D-ribulose 1,5-bisphosphate + O2 = 2-phosphoglycolate + (2R)-3-phosphoglycerate + 2 H(+). Functionally, ruBisCO catalyzes two reactions: the carboxylation of D-ribulose 1,5-bisphosphate, the primary event in carbon dioxide fixation, as well as the oxidative fragmentation of the pentose substrate in the photorespiration process. Both reactions occur simultaneously and in competition at the same active site. In Brownea coccinea (Rose of Venezuela), this protein is Ribulose bisphosphate carboxylase large chain.